The chain runs to 383 residues: Acetylornithine deacetylase (383 aa).

Histidine 80 contributes to the Zn(2+) binding site. Aspartate 82 is a catalytic residue. Aspartate 112 is a Zn(2+) binding site. Glutamate 144 is an active-site residue. Residues glutamate 145, glutamate 169, and histidine 355 each coordinate Zn(2+).

This sequence belongs to the peptidase M20A family. ArgE subfamily. As to quaternary structure, homodimer. The cofactor is Zn(2+). Co(2+) serves as cofactor. Glutathione is required as a cofactor.

Its subcellular location is the cytoplasm. The catalysed reaction is N(2)-acetyl-L-ornithine + H2O = L-ornithine + acetate. It participates in amino-acid biosynthesis; L-arginine biosynthesis; L-ornithine from N(2)-acetyl-L-ornithine (linear): step 1/1. Functionally, catalyzes the hydrolysis of the amide bond of N(2)-acetylated L-amino acids. Cleaves the acetyl group from N-acetyl-L-ornithine to form L-ornithine, an intermediate in L-arginine biosynthesis pathway, and a branchpoint in the synthesis of polyamines. In Salmonella paratyphi A (strain ATCC 9150 / SARB42), this protein is Acetylornithine deacetylase.